Consider the following 128-residue polypeptide: UPF0325 protein CKO_03204 (128 aa).

This sequence belongs to the UPF0325 family.

The sequence is that of UPF0325 protein CKO_03204 from Citrobacter koseri (strain ATCC BAA-895 / CDC 4225-83 / SGSC4696).